Here is a 208-residue protein sequence, read N- to C-terminus: Phosphoheptose isomerase (208 aa).

The SIS domain maps to 38–200 (MALTLARGRK…LFENVLALQP (163 aa)). A substrate-binding site is contributed by 53-55 (NGG). 2 residues coordinate Zn(2+): histidine 62 and glutamate 66. Substrate is bound by residues glutamate 66, 95–96 (ND), 121–123 (STS), serine 126, and glutamine 173. The Zn(2+) site is built by glutamine 173 and histidine 181.

This sequence belongs to the SIS family. GmhA subfamily. Homotetramer. Zn(2+) serves as cofactor.

The protein resides in the cytoplasm. It carries out the reaction 2 D-sedoheptulose 7-phosphate = D-glycero-alpha-D-manno-heptose 7-phosphate + D-glycero-beta-D-manno-heptose 7-phosphate. Its pathway is carbohydrate biosynthesis; D-glycero-D-manno-heptose 7-phosphate biosynthesis; D-glycero-alpha-D-manno-heptose 7-phosphate and D-glycero-beta-D-manno-heptose 7-phosphate from sedoheptulose 7-phosphate: step 1/1. Catalyzes the isomerization of sedoheptulose 7-phosphate in D-glycero-D-manno-heptose 7-phosphate. The sequence is that of Phosphoheptose isomerase from Nitratidesulfovibrio vulgaris (strain DSM 19637 / Miyazaki F) (Desulfovibrio vulgaris).